We begin with the raw amino-acid sequence, 161 residues long: SsrA-binding protein (161 aa).

The disordered stretch occupies residues 1–23 (MATKKNEQIKGRTDGLVAENRRS).

It belongs to the SmpB family.

Its subcellular location is the cytoplasm. Functionally, required for rescue of stalled ribosomes mediated by trans-translation. Binds to transfer-messenger RNA (tmRNA), required for stable association of tmRNA with ribosomes. tmRNA and SmpB together mimic tRNA shape, replacing the anticodon stem-loop with SmpB. tmRNA is encoded by the ssrA gene; the 2 termini fold to resemble tRNA(Ala) and it encodes a 'tag peptide', a short internal open reading frame. During trans-translation Ala-aminoacylated tmRNA acts like a tRNA, entering the A-site of stalled ribosomes, displacing the stalled mRNA. The ribosome then switches to translate the ORF on the tmRNA; the nascent peptide is terminated with the 'tag peptide' encoded by the tmRNA and targeted for degradation. The ribosome is freed to recommence translation, which seems to be the essential function of trans-translation. This is SsrA-binding protein from Hyphomonas neptunium (strain ATCC 15444).